A 328-amino-acid polypeptide reads, in one-letter code: Cytochrome c biogenesis protein CcsA (328 aa).

A run of 8 helical transmembrane segments spans residues 13 to 33 (ISFS…LVNL), 46 to 66 (GIII…IYSG), 73 to 93 (LYES…VSYF), 101 to 121 (LNTI…SGLL), 146 to 166 (MILG…LLVI), 234 to 254 (IISL…VWAN), 263 to 283 (WDPK…YLHI), and 295 to 315 (AIVA…VNLL).

This sequence belongs to the CcmF/CycK/Ccl1/NrfE/CcsA family. As to quaternary structure, may interact with Ccs1.

It is found in the plastid. It localises to the chloroplast thylakoid membrane. In terms of biological role, required during biogenesis of c-type cytochromes (cytochrome c6 and cytochrome f) at the step of heme attachment. This chain is Cytochrome c biogenesis protein CcsA, found in Arabidopsis thaliana (Mouse-ear cress).